The chain runs to 168 residues: Putative ankyrin repeat protein RBE_1411 (168 aa).

ANK repeat units follow at residues 59-88, 98-127, and 131-160; these read TIFS…LQHK, YGDT…DLTI, and KGET…ILGN.

This is Putative ankyrin repeat protein RBE_1411 from Rickettsia bellii (strain RML369-C).